We begin with the raw amino-acid sequence, 98 residues long: NADH-ubiquinone oxidoreductase chain 4L (98 aa).

Helical transmembrane passes span 29 to 49 (SLLC…LLIL) and 61 to 81 (ILLL…LVTV).

The protein belongs to the complex I subunit 4L family. As to quaternary structure, core subunit of respiratory chain NADH dehydrogenase (Complex I) which is composed of 45 different subunits.

It localises to the mitochondrion inner membrane. It catalyses the reaction a ubiquinone + NADH + 5 H(+)(in) = a ubiquinol + NAD(+) + 4 H(+)(out). In terms of biological role, core subunit of the mitochondrial membrane respiratory chain NADH dehydrogenase (Complex I) which catalyzes electron transfer from NADH through the respiratory chain, using ubiquinone as an electron acceptor. Part of the enzyme membrane arm which is embedded in the lipid bilayer and involved in proton translocation. This is NADH-ubiquinone oxidoreductase chain 4L (MT-ND4L) from Cheirogaleus medius (Fat-tailed dwarf lemur).